The primary structure comprises 105 residues: Signal peptidase complex subunit 1 (105 aa).

Topologically, residues M1–Q32 are cytoplasmic. The chain crosses the membrane as a helical span at residues V33–S53. Over Y54 to M56 the chain is Lumenal. Residues F57 to L77 traverse the membrane as a helical segment. The Cytoplasmic portion of the chain corresponds to F78 to K105.

Belongs to the SPCS1 family. As to quaternary structure, component of the signal peptidase complex (SPC) composed of a catalytic subunit sec-11 and three accessory subunits spcs-1, spcs-2 and spcs-3. The complex induces a local thinning of the ER membrane which is used to measure the length of the signal peptide (SP) h-region of protein substrates. This ensures the selectivity of the complex towards h-regions shorter than 18-20 amino acids.

The protein resides in the endoplasmic reticulum membrane. Functionally, component of the signal peptidase complex (SPC) which catalyzes the cleavage of N-terminal signal sequences from nascent proteins as they are translocated into the lumen of the endoplasmic reticulum. Dispensable for SPC enzymatic activity. In Caenorhabditis elegans, this protein is Signal peptidase complex subunit 1.